We begin with the raw amino-acid sequence, 217 residues long: Nascent polypeptide-associated complex subunit alpha-like protein 2 (217 aa).

Positions 1–81 (MSPPPAVVTE…SEKKSRKAML (81 aa)) are disordered. Acidic residues predominate over residues 37 to 60 (PIVEDVKDDEDDDDDDEEEEDDDA). The region spanning 70-135 (SRSEKKSRKA…AKIEDLSSQL (66 aa)) is the NAC-A/B domain. The region spanning 178 to 215 (VEARDIDLVMTQAGVSRSKAVKALKSHDGDIVSAIMEL) is the UBA domain.

It belongs to the NAC-alpha family.

Functionally, may promote appropriate targeting of ribosome-nascent polypeptide complexes. The protein is Nascent polypeptide-associated complex subunit alpha-like protein 2 of Arabidopsis thaliana (Mouse-ear cress).